The sequence spans 316 residues: MACQCFLVGAGYVALAAVAYRILTIFSNILGPYVLLSPIDLKKRAGASWAVITGATDGIGKAYAFELARRGFNVFIVSRTQSKLDETKKEILEKYPNIEVRTAAYDFTNAAPSGYKNLLETLNKVEIGVLVNNVGLSYEYPDVLHKVDGGIERLANITTINTLPPTLLSAGILPQMVARKAGVIVNVGSSASANQMALWAVYSATKKYVSWLTAILRKEYEHQGITIQTIAPMMVATKMSKVKRTSFFTPDGATFAKSALNTVGNSSDTTGYITHQLQLEVMDLIPTFIRDKILTNMSVGTRAAALRKKEREAKAQ.

Residues 52-80 (ITGATDGIGKAYAFELARRGFNVFIVSRT) and D106 each bind NADP(+). Residue S189 coordinates substrate. Y202 serves as the catalytic Proton acceptor. K206 contacts NADP(+).

This sequence belongs to the short-chain dehydrogenases/reductases (SDR) family. 17-beta-HSD 3 subfamily.

It catalyses the reaction a very-long-chain (3R)-3-hydroxyacyl-CoA + NADP(+) = a very-long-chain 3-oxoacyl-CoA + NADPH + H(+). It participates in lipid metabolism; fatty acid biosynthesis. Functionally, required for branched chain fatty acid synthesis. Catalyzes the reduction of the 3-ketoacyl-CoA intermediate that is formed in each cycle of fatty acid elongation. Very long-chain fatty acids (VLCFAs) serve as precursors for ceramide and sphingolipids. May also be required for sterol hormone production. The polypeptide is Very-long-chain 3-oxooacyl-coA reductase let-767 (Caenorhabditis briggsae).